The sequence spans 241 residues: Phosphatidylglycerophosphatase B (241 aa).

A helical membrane pass occupies residues 1–21; the sequence is MFKRLSLYTLLLCLVPFFIWG. Residues 22–52 are Periplasmic-facing; the sequence is ISYQWHGNSQLTQADYWLYLLTETGSVPYAL. A helical transmembrane segment spans residues 53 to 62; that stretch reads ITCVLFTLLF. Topologically, residues 63–67 are cytoplasmic; the sequence is AFLFK. A helical transmembrane segment spans residues 68–91; sequence NPKQWILGVIVMGISVIATQAAKT. The Periplasmic portion of the chain corresponds to 92-158; that stretch reads GAKALFEEPR…ENETGYSFPS (67 aa). The interval 94 to 102 is phosphatase sequence motif I; that stretch reads KALFEEPRP. Residues 157–160 form a phosphatase sequence motif II region; the sequence is PSGH. Residues 159–173 form a helical membrane-spanning segment; it reads GHTIFAATWLMLAVG. His160 serves as the catalytic Proton donor; for a subset of substrates. The Cytoplasmic segment spans residues 174–184; it reads FTQLLGNRSFK. A helical transmembrane segment spans residues 185–204; the sequence is AKLLVVGIAVWGLLMLISRV. The segment at 202–213 is phosphatase sequence motif III; it reads SRVRLGMHYPID. At 205-210 the chain is on the periplasmic side; the sequence is RLGMHY. His209 serves as the catalytic Nucleophile. A helical transmembrane segment spans residues 211-235; it reads PIDLLVATLLAWLINSIIFAFLKKK. At 236–241 the chain is on the cytoplasmic side; that stretch reads AIFVMK.

Belongs to the PA-phosphatase related phosphoesterase family.

It is found in the cell inner membrane. Its subcellular location is the cell outer membrane. The catalysed reaction is a 1,2-diacyl-sn-glycero-3-phospho-(1'-sn-glycero-3'-phosphate) + H2O = a 1,2-diacyl-sn-glycero-3-phospho-(1'-sn-glycerol) + phosphate. It carries out the reaction a 1,2-diacyl-sn-glycerol 3-diphosphate + H2O = a 1,2-diacyl-sn-glycero-3-phosphate + phosphate + H(+). The enzyme catalyses a 1,2-diacyl-sn-glycero-3-phosphate + H2O = a 1,2-diacyl-sn-glycerol + phosphate. It catalyses the reaction di-trans,octa-cis-undecaprenyl diphosphate + H2O = di-trans,octa-cis-undecaprenyl phosphate + phosphate + H(+). It functions in the pathway phospholipid metabolism; phosphatidylglycerol biosynthesis; phosphatidylglycerol from CDP-diacylglycerol: step 2/2. Catalyzes the dephosphorylation of diacylglycerol diphosphate (DGPP) to phosphatidate (PA) and the subsequent dephosphorylation of PA to diacylglycerol (DAG). Also has undecaprenyl pyrophosphate phosphatase activity, required for the biosynthesis of the lipid carrier undecaprenyl phosphate. Can also use lysophosphatidic acid (LPA) and phosphatidylglycerophosphate as substrates. The pattern of activities varies according to subcellular location, PGP phosphatase activity is higher in the cytoplasmic membrane, whereas PA and LPA phosphatase activities are higher in the outer membrane. Activity is independent of a divalent cation ion and insensitive to inhibition by N-ethylmaleimide. The polypeptide is Phosphatidylglycerophosphatase B (pgpB) (Haemophilus influenzae (strain ATCC 51907 / DSM 11121 / KW20 / Rd)).